The sequence spans 226 residues: Protein-L-isoaspartate O-methyltransferase (226 aa).

Residue serine 66 is part of the active site.

The protein belongs to the methyltransferase superfamily. L-isoaspartyl/D-aspartyl protein methyltransferase family.

It is found in the cytoplasm. The enzyme catalyses [protein]-L-isoaspartate + S-adenosyl-L-methionine = [protein]-L-isoaspartate alpha-methyl ester + S-adenosyl-L-homocysteine. Its function is as follows. Catalyzes the methyl esterification of L-isoaspartyl residues in peptides and proteins that result from spontaneous decomposition of normal L-aspartyl and L-asparaginyl residues. It plays a role in the repair and/or degradation of damaged proteins. This Methanopyrus kandleri (strain AV19 / DSM 6324 / JCM 9639 / NBRC 100938) protein is Protein-L-isoaspartate O-methyltransferase.